A 326-amino-acid chain; its full sequence is 4-hydroxythreonine-4-phosphate dehydrogenase (326 aa).

Substrate is bound by residues His132 and Thr133. His162, His207, and His262 together coordinate a divalent metal cation. Residues Lys270, Asn279, and Arg288 each coordinate substrate.

Belongs to the PdxA family. As to quaternary structure, homodimer. Requires Zn(2+) as cofactor. Mg(2+) serves as cofactor. It depends on Co(2+) as a cofactor.

It is found in the cytoplasm. The catalysed reaction is 4-(phosphooxy)-L-threonine + NAD(+) = 3-amino-2-oxopropyl phosphate + CO2 + NADH. The protein operates within cofactor biosynthesis; pyridoxine 5'-phosphate biosynthesis; pyridoxine 5'-phosphate from D-erythrose 4-phosphate: step 4/5. In terms of biological role, catalyzes the NAD(P)-dependent oxidation of 4-(phosphooxy)-L-threonine (HTP) into 2-amino-3-oxo-4-(phosphooxy)butyric acid which spontaneously decarboxylates to form 3-amino-2-oxopropyl phosphate (AHAP). This Ruegeria sp. (strain TM1040) (Silicibacter sp.) protein is 4-hydroxythreonine-4-phosphate dehydrogenase.